The sequence spans 53 residues: UPF0391 membrane protein PSEEN0090 (53 aa).

The next 2 helical transmembrane spans lie at 4-24 (WAIT…GGIA) and 29-49 (GIAK…FFFG).

Belongs to the UPF0391 family.

Its subcellular location is the cell membrane. The polypeptide is UPF0391 membrane protein PSEEN0090 (Pseudomonas entomophila (strain L48)).